We begin with the raw amino-acid sequence, 291 residues long: Ribosomal RNA small subunit methyltransferase A (291 aa).

The S-adenosyl-L-methionine site is built by Asn-33, Val-35, Gly-60, Glu-81, Asp-111, and Asn-129.

It belongs to the class I-like SAM-binding methyltransferase superfamily. rRNA adenine N(6)-methyltransferase family. RsmA subfamily.

Its subcellular location is the cytoplasm. It carries out the reaction adenosine(1518)/adenosine(1519) in 16S rRNA + 4 S-adenosyl-L-methionine = N(6)-dimethyladenosine(1518)/N(6)-dimethyladenosine(1519) in 16S rRNA + 4 S-adenosyl-L-homocysteine + 4 H(+). Functionally, specifically dimethylates two adjacent adenosines (A1518 and A1519) in the loop of a conserved hairpin near the 3'-end of 16S rRNA in the 30S particle. May play a critical role in biogenesis of 30S subunits. In Streptomyces griseus subsp. griseus (strain JCM 4626 / CBS 651.72 / NBRC 13350 / KCC S-0626 / ISP 5235), this protein is Ribosomal RNA small subunit methyltransferase A.